The chain runs to 342 residues: Ferredoxin--NADP reductase (342 aa).

FAD contacts are provided by Cys-17, Asp-36, Gln-44, Tyr-49, Val-89, Phe-124, Asp-289, and Thr-330.

Belongs to the ferredoxin--NADP reductase type 2 family. As to quaternary structure, homodimer. FAD serves as cofactor.

The catalysed reaction is 2 reduced [2Fe-2S]-[ferredoxin] + NADP(+) + H(+) = 2 oxidized [2Fe-2S]-[ferredoxin] + NADPH. This is Ferredoxin--NADP reductase from Bradyrhizobium sp. (strain ORS 278).